A 253-amino-acid chain; its full sequence is Phosphate import ATP-binding protein PstB 1 (253 aa).

The 242-residue stretch at 7–248 (LQIRDLSVYY…PKRKETEDYI (242 aa)) folds into the ABC transporter domain. 39-46 (GPSGSGKS) contacts ATP.

It belongs to the ABC transporter superfamily. Phosphate importer (TC 3.A.1.7) family. As to quaternary structure, the complex is composed of two ATP-binding proteins (PstB), two transmembrane proteins (PstC and PstA) and a solute-binding protein (PstS).

The protein resides in the cell membrane. It catalyses the reaction phosphate(out) + ATP + H2O = ADP + 2 phosphate(in) + H(+). Its function is as follows. Part of the ABC transporter complex PstSACB involved in phosphate import. Responsible for energy coupling to the transport system. The protein is Phosphate import ATP-binding protein PstB 1 of Streptococcus pyogenes serotype M12 (strain MGAS9429).